A 1134-amino-acid chain; its full sequence is TBC1 domain family member 8 (1134 aa).

GRAM domains are found at residues Val-145–Ser-212 and Glu-285–Glu-353. Residues Ala-433 to Ser-466 are disordered. The span at Ser-437–Pro-447 shows a compositional bias: basic and acidic residues. Residues Val-455 to Ser-466 show a composition bias toward polar residues. The Rab-GAP TBC domain occupies Gly-504–Gly-691. Positions Ser-1034–Glu-1070 are disordered.

Its function is as follows. May act as a GTPase-activating protein for Rab family protein(s). The protein is TBC1 domain family member 8 (Tbc1d8) of Mus musculus (Mouse).